Here is a 475-residue protein sequence, read N- to C-terminus: tRNA-2-methylthio-N(6)-dimethylallyladenosine synthase (475 aa).

Residues 2 to 119 (AKLHITTWGC…LPEMINKIRG (118 aa)) enclose the MTTase N-terminal domain. Residues C11, C48, C82, C156, C160, and C163 each coordinate [4Fe-4S] cluster. The region spanning 142–374 (RAEGPTAFVS…QQRINHQAMQ (233 aa)) is the Radical SAM core domain. Residues 377-440 (RAMLGTEQRV…TNSLRGEVVR (64 aa)) form the TRAM domain.

Belongs to the methylthiotransferase family. MiaB subfamily. In terms of assembly, monomer. [4Fe-4S] cluster serves as cofactor.

It localises to the cytoplasm. It catalyses the reaction N(6)-dimethylallyladenosine(37) in tRNA + (sulfur carrier)-SH + AH2 + 2 S-adenosyl-L-methionine = 2-methylsulfanyl-N(6)-dimethylallyladenosine(37) in tRNA + (sulfur carrier)-H + 5'-deoxyadenosine + L-methionine + A + S-adenosyl-L-homocysteine + 2 H(+). Catalyzes the methylthiolation of N6-(dimethylallyl)adenosine (i(6)A), leading to the formation of 2-methylthio-N6-(dimethylallyl)adenosine (ms(2)i(6)A) at position 37 in tRNAs that read codons beginning with uridine. In Actinobacillus pleuropneumoniae serotype 3 (strain JL03), this protein is tRNA-2-methylthio-N(6)-dimethylallyladenosine synthase.